The chain runs to 947 residues: Protein NLP8 (947 aa).

Disordered stretches follow at residues 114–135, 509–533, and 550–591; these read RSSA…ELSG, STKK…TTSS, and SMFS…EKNV. Positions 126 to 135 are enriched in basic and acidic residues; sequence RSSDSDELSG. 2 stretches are compositionally biased toward polar residues: residues 522–533 and 550–572; these read SDMSNFPQTTSS and SMFS…TLEQ. The segment covering 573–587 has biased composition (basic and acidic residues); sequence DVSKARTPEKKKSTT. The 95-residue stretch at 577–671 folds into the RWP-RK domain; sequence ARTPEKKKST…LDSVQGVEGG (95 aa). Residues 646 to 666 adopt a coiled-coil conformation; sequence RKINKVNRSLRKIQTVLDSVQ. Low complexity predominate over residues 805-815; the sequence is SCSISDSSNGS. The disordered stretch occupies residues 805-828; that stretch reads SCSISDSSNGSGAVLRGSSSTSME. Residues 847-929 enclose the PB1 domain; the sequence is TLIVKASYRE…HSVKFLVRDL (83 aa).

Its subcellular location is the nucleus. Functionally, probable transcription factor. In Arabidopsis thaliana (Mouse-ear cress), this protein is Protein NLP8 (NLP8).